The primary structure comprises 830 residues: Lon protease (830 aa).

In terms of domain architecture, Lon N-terminal spans 20–215; sequence LPAVAIRDVV…LLIKILANEV (196 aa). 367-374 is an ATP binding site; that stretch reads GPPGVGKT. In terms of domain architecture, Lon proteolytic spans 602–781; that stretch reads ENGVGISTGL…DEIVKIAFEK (180 aa). Catalysis depends on residues Ser-687 and Lys-730. The tract at residues 784 to 830 is disordered; that stretch reads PKSSFKKSKTAPKKESAKKAAKSKKPAVKKPAVKKTKQVKKTAKKKK. The span at 802–830 shows a compositional bias: basic residues; sequence KAAKSKKPAVKKPAVKKTKQVKKTAKKKK.

Belongs to the peptidase S16 family. Homohexamer. Organized in a ring with a central cavity.

The protein localises to the cytoplasm. The catalysed reaction is Hydrolysis of proteins in presence of ATP.. Functionally, ATP-dependent serine protease that mediates the selective degradation of mutant and abnormal proteins as well as certain short-lived regulatory proteins. Required for cellular homeostasis and for survival from DNA damage and developmental changes induced by stress. Degrades polypeptides processively to yield small peptide fragments that are 5 to 10 amino acids long. Binds to DNA in a double-stranded, site-specific manner. In Elusimicrobium minutum (strain Pei191), this protein is Lon protease.